The following is a 180-amino-acid chain: uncharacterized protein (180 aa).

The region spanning 35–163 (LRHRATYIVV…TPDSLKALAL (129 aa)) is the Nudix hydrolase domain. The Nudix box motif lies at 72–94 (GGVVQADEQLLESARREAEEELG). 2 residues coordinate Mg(2+): E88 and E92.

Belongs to the Nudix hydrolase family. Mg(2+) serves as cofactor.

This is an uncharacterized protein from Escherichia coli O157:H7.